The sequence spans 56 residues: Pituitary adenylate cyclase-activating polypeptide (56 aa).

The important for receptor binding stretch occupies residues 42 to 50 (VKKYLAAVL). Position 50 is a leucine amide (Leu50).

It belongs to the glucagon family. As to quaternary structure, interacts with ADCYAP1R1 (via N-terminal extracellular domain).

The protein resides in the secreted. In terms of biological role, PACAP is a neuropeptide involved in diverse array of physiological processes through activating the PACAP subfamily of class B1 G protein-coupled receptors: VIP receptor 1 (VIPR1), VIP receptor 2 (VIPR2), and PACAP type I receptor (ADCYAP1R1). Exerts neuroprotective and general cytoprotective effects due to anti-apoptotic, anti-inflammatory, and antioxidant actions. The polypeptide is Pituitary adenylate cyclase-activating polypeptide (Adcyap1) (Heloderma suspectum (Gila monster)).